A 569-amino-acid polypeptide reads, in one-letter code: Urease subunit beta (569 aa).

The Urease domain maps to 131–569; the sequence is GGIDTHIHFI…LSLAQLYNLF (439 aa). Ni(2+)-binding residues include H136, H138, and K219. K219 bears the N6-carboxylysine mark. H221 lines the substrate pocket. The Ni(2+) site is built by H248 and H274. H322 serves as the catalytic Proton donor. A Ni(2+)-binding site is contributed by D362.

It belongs to the metallo-dependent hydrolases superfamily. Urease alpha subunit family. Heterohexamer of 3 UreA (alpha) and 3 UreB (beta) subunits. Requires Ni cation as cofactor. In terms of processing, carboxylation allows a single lysine to coordinate two nickel ions.

The protein resides in the cytoplasm. The catalysed reaction is urea + 2 H2O + H(+) = hydrogencarbonate + 2 NH4(+). The protein operates within nitrogen metabolism; urea degradation; CO(2) and NH(3) from urea (urease route): step 1/1. This is Urease subunit beta from Helicobacter felis (strain ATCC 49179 / CCUG 28539 / NCTC 12436 / CS1).